The primary structure comprises 187 residues: Protein GrpE (187 aa).

A compositionally biased stretch (low complexity) spans methionine 1–glutamate 17. The interval methionine 1–glutamate 27 is disordered.

This sequence belongs to the GrpE family. In terms of assembly, homodimer.

It is found in the cytoplasm. In terms of biological role, participates actively in the response to hyperosmotic and heat shock by preventing the aggregation of stress-denatured proteins, in association with DnaK and GrpE. It is the nucleotide exchange factor for DnaK and may function as a thermosensor. Unfolded proteins bind initially to DnaJ; upon interaction with the DnaJ-bound protein, DnaK hydrolyzes its bound ATP, resulting in the formation of a stable complex. GrpE releases ADP from DnaK; ATP binding to DnaK triggers the release of the substrate protein, thus completing the reaction cycle. Several rounds of ATP-dependent interactions between DnaJ, DnaK and GrpE are required for fully efficient folding. In Thioalkalivibrio sulfidiphilus (strain HL-EbGR7), this protein is Protein GrpE.